Here is a 342-residue protein sequence, read N- to C-terminus: UDP-3-O-acylglucosamine N-acyltransferase (342 aa).

The Proton acceptor role is filled by His-234.

This sequence belongs to the transferase hexapeptide repeat family. LpxD subfamily. As to quaternary structure, homotrimer.

It catalyses the reaction a UDP-3-O-[(3R)-3-hydroxyacyl]-alpha-D-glucosamine + a (3R)-hydroxyacyl-[ACP] = a UDP-2-N,3-O-bis[(3R)-3-hydroxyacyl]-alpha-D-glucosamine + holo-[ACP] + H(+). It functions in the pathway bacterial outer membrane biogenesis; LPS lipid A biosynthesis. In terms of biological role, catalyzes the N-acylation of UDP-3-O-acylglucosamine using 3-hydroxyacyl-ACP as the acyl donor. Is involved in the biosynthesis of lipid A, a phosphorylated glycolipid that anchors the lipopolysaccharide to the outer membrane of the cell. This chain is UDP-3-O-acylglucosamine N-acyltransferase, found in Oleidesulfovibrio alaskensis (strain ATCC BAA-1058 / DSM 17464 / G20) (Desulfovibrio alaskensis).